The primary structure comprises 374 residues: Queuine tRNA-ribosyltransferase (374 aa).

D92 acts as the Proton acceptor in catalysis. Substrate is bound by residues 92 to 96, D146, Q193, and G220; that span reads DSGGY. The segment at 251-257 is RNA binding; sequence GVGKPDD. D270 acts as the Nucleophile in catalysis. An RNA binding; important for wobble base 34 recognition region spans residues 275 to 279; that stretch reads TRSGR. Residues C308, C310, C313, and H339 each coordinate Zn(2+).

This sequence belongs to the queuine tRNA-ribosyltransferase family. In terms of assembly, homodimer. Within each dimer, one monomer is responsible for RNA recognition and catalysis, while the other monomer binds to the replacement base PreQ1. Zn(2+) serves as cofactor.

The enzyme catalyses 7-aminomethyl-7-carbaguanine + guanosine(34) in tRNA = 7-aminomethyl-7-carbaguanosine(34) in tRNA + guanine. The protein operates within tRNA modification; tRNA-queuosine biosynthesis. In terms of biological role, catalyzes the base-exchange of a guanine (G) residue with the queuine precursor 7-aminomethyl-7-deazaguanine (PreQ1) at position 34 (anticodon wobble position) in tRNAs with GU(N) anticodons (tRNA-Asp, -Asn, -His and -Tyr). Catalysis occurs through a double-displacement mechanism. The nucleophile active site attacks the C1' of nucleotide 34 to detach the guanine base from the RNA, forming a covalent enzyme-RNA intermediate. The proton acceptor active site deprotonates the incoming PreQ1, allowing a nucleophilic attack on the C1' of the ribose to form the product. After dissociation, two additional enzymatic reactions on the tRNA convert PreQ1 to queuine (Q), resulting in the hypermodified nucleoside queuosine (7-(((4,5-cis-dihydroxy-2-cyclopenten-1-yl)amino)methyl)-7-deazaguanosine). The protein is Queuine tRNA-ribosyltransferase of Novosphingobium aromaticivorans (strain ATCC 700278 / DSM 12444 / CCUG 56034 / CIP 105152 / NBRC 16084 / F199).